The following is a 320-amino-acid chain: Malate dehydrogenase (320 aa).

NAD(+)-binding positions include 10–15 (GAGMIG) and D34. The substrate site is built by R83 and R89. NAD(+) contacts are provided by residues N96 and 119–121 (ITN). Positions 121 and 152 each coordinate substrate. The active-site Proton acceptor is H176.

The protein belongs to the LDH/MDH superfamily. MDH type 3 family.

The enzyme catalyses (S)-malate + NAD(+) = oxaloacetate + NADH + H(+). Functionally, catalyzes the reversible oxidation of malate to oxaloacetate. The polypeptide is Malate dehydrogenase (Caulobacter vibrioides (strain NA1000 / CB15N) (Caulobacter crescentus)).